A 932-amino-acid chain; its full sequence is MAAQPRGGDCRGFVLLSILLGTPWEAWAGRILYSVSEETDKGSFVGDIAKDLGLEPRELAERGVRIISRGRTQLFALNQRSGSLVTAGRIDREEICAQSARCLVNFNILMEDKMNLYPIDVEIIDINDNVPRFLTEEINVKIMENTAPGVRFPLSEAGDPDVGTNSLQSYQLSPNRHFSLAVQSGDDGTKYPELVLERVLDREEERVHHLVLTASDGGDPPRSSTAHIQVTVVDVNDHTPVFSLPQYQVTVPENVPVGTRLLTVHAIDLDEGVNGEVTYSFRKITPKLPQMFHLNSLTGEISTLEGLDYEETAFYEMEVQAQDGPGSLTKAKVLITVLDVNDNAPEVTMTSLSSSIPEDTPLGTVIALFYLQDRDSGKNGEVTCTIPENLPFKLEKSIDNYYRLVTTKNLDRETLSLYNITLKATDGGTPPLSRETHIFMQVADTNDNPPTFPHSSYSVYIAENNPRGASIFLVTAQDHDSEDNAQITYSLAEDTIQGAPVSSYVSINSDTGVLYALQSFDYEQLRELQLRVTAHDSGDPPLSSNMSLSLFVLDQNDNPPEILYPALPTDGSTGMELAPRSAEPGYLVTKVVAVDKDSGQNAWLSYLLLKASEPGLFAVGLYTGEVRTARALLDRDALKQSLVVAVQDHGQPPLSATVTLTVAVADSIPEVLADLGSLEPSDGPYNYDLTLYLVVAVAAVSCVFLAFVLVLLALRLRRWHKSRLLQASEGGLASVPTSHFVGMDRVQAFLQTYSHEVSLTADSRKSHLIFPQPNYVDMLISQESCEKNDSLLTSVDFQECKDDVPSIQQAPPNTDWRFSQAQRPGTSGSQNGDDTGTWPNNQFDTEMLQAMILASASEAADGSSTLGGGAGTMGLSARYGPQFTLQHVPDYRQNVYIPGSNATLTNAAGKRDGKAPAGGNGNKKKSGKKEKK.

An N-terminal signal peptide occupies residues 1–28 (MAAQPRGGDCRGFVLLSILLGTPWEAWA). Cadherin domains lie at 29 to 133 (GRIL…VPRF), 134 to 242 (LTEE…TPVF), 243 to 347 (SLPQ…APEV), 348 to 452 (TMTS…PPTF), 453 to 562 (PHSS…PPEI), and 570 to 682 (DGST…EPSD). At 29–692 (GRILYSVSEE…GPYNYDLTLY (664 aa)) the chain is on the extracellular side. N-linked (GlcNAc...) asparagine glycosylation is found at asparagine 419 and asparagine 545. Residues 693-713 (LVVAVAAVSCVFLAFVLVLLA) form a helical membrane-spanning segment. At 714–932 (LRLRRWHKSR…KKKSGKKEKK (219 aa)) the chain is on the cytoplasmic side. Disordered regions lie at residues 804–841 (VPSIQQAPPNTDWRFSQAQRPGTSGSQNGDDTGTWPNN) and 902–932 (ATLTNAAGKRDGKAPAGGNGNKKKSGKKEKK). A compositionally biased stretch (polar residues) spans 806–841 (SIQQAPPNTDWRFSQAQRPGTSGSQNGDDTGTWPNN). A compositionally biased stretch (basic residues) spans 922 to 932 (NKKKSGKKEKK).

The protein localises to the cell membrane. Potential calcium-dependent cell-adhesion protein. May be involved in the establishment and maintenance of specific neuronal connections in the brain. The polypeptide is Protocadherin gamma-A7 (PCDHGA7) (Pan troglodytes (Chimpanzee)).